The primary structure comprises 251 residues: Cytochrome c oxidase subunit 2 (251 aa).

The N-terminal stretch at 1 to 15 is a signal peptide; it reads MLTFLSNLNNMIIMN. Over 16–42 the chain is Mitochondrial intermembrane; sequence DVPTPYGVYFQDSATPNQEGILELHDN. A helical transmembrane segment spans residues 43-64; sequence IMFYLLVILGLVSWLLFTITRT. Topologically, residues 65–82 are mitochondrial matrix; that stretch reads YSKNPIAYKYIKHGQTIE. A helical membrane pass occupies residues 83 to 107; it reads IIWTIFPAVVLLIIAFPSFILLYLC. At 108–251 the chain is on the mitochondrial intermembrane side; that stretch reads DEVISPAMTI…PSFLEWLNEQ (144 aa). Residues His-186, Cys-221, Glu-223, Cys-225, His-229, and Met-232 each contribute to the Cu cation site. Glu-223 contributes to the Mg(2+) binding site.

The protein belongs to the cytochrome c oxidase subunit 2 family. In terms of assembly, component of the cytochrome c oxidase (complex IV, CIV), a multisubunit enzyme composed of a catalytic core of 3 subunits and several supernumerary subunits. The complex exists as a monomer or a dimer and forms supercomplexes (SCs) in the inner mitochondrial membrane with ubiquinol-cytochrome c oxidoreductase (cytochrome b-c1 complex, complex III, CIII). It depends on Cu cation as a cofactor. Post-translationally, the signal sequence of COX2 is processed by IMP1.

It is found in the mitochondrion inner membrane. It carries out the reaction 4 Fe(II)-[cytochrome c] + O2 + 8 H(+)(in) = 4 Fe(III)-[cytochrome c] + 2 H2O + 4 H(+)(out). Its function is as follows. Component of the cytochrome c oxidase, the last enzyme in the mitochondrial electron transport chain which drives oxidative phosphorylation. The respiratory chain contains 3 multisubunit complexes succinate dehydrogenase (complex II, CII), ubiquinol-cytochrome c oxidoreductase (cytochrome b-c1 complex, complex III, CIII) and cytochrome c oxidase (complex IV, CIV), that cooperate to transfer electrons derived from NADH and succinate to molecular oxygen, creating an electrochemical gradient over the inner membrane that drives transmembrane transport and the ATP synthase. Cytochrome c oxidase is the component of the respiratory chain that catalyzes the reduction of oxygen to water. Electrons originating from reduced cytochrome c in the intermembrane space (IMS) are transferred via the dinuclear copper A center (CU(A)) of subunit 2 and heme A of subunit 1 to the active site in subunit 1, a binuclear center (BNC) formed by heme A3 and copper B (CU(B)). The BNC reduces molecular oxygen to 2 water molecules using 4 electrons from cytochrome c in the IMS and 4 protons from the mitochondrial matrix. This Lachancea kluyveri (strain ATCC 58438 / CBS 3082 / BCRC 21498 / NBRC 1685 / JCM 7257 / NCYC 543 / NRRL Y-12651) (Yeast) protein is Cytochrome c oxidase subunit 2 (COX2).